The following is a 70-amino-acid chain: U2-agatoxin-Ao1l (70 aa).

The signal sequence occupies residues 1–20 (MRAIISLLLISAMVFSIIEA). The propeptide occupies 21-34 (VPEEEGLQLSEDER). Cystine bridges form between Cys-37/Cys-53, Cys-44/Cys-58, and Cys-52/Cys-68. At Leu-69 the chain carries Leucine amide.

It belongs to the neurotoxin 01 (U2-agtx) family. As to expression, expressed by the venom gland.

It is found in the secreted. Functionally, insect active toxin causing rapid but reversible paralysis in crickets. No activity shown in mammals. Does not show effect on mammalian voltage-gated calcium channels. The sequence is that of U2-agatoxin-Ao1l from Agelena orientalis (Funnel-web spider).